Consider the following 680-residue polypeptide: Translation factor GUF1 homolog, chloroplastic (680 aa).

The N-terminal 51 residues, 1–51 (MATATASRLAVPAPRTSPQAPGRRRPAAPLPSAPPRPRALSAAPRGRVVCP), are a transit peptide targeting the chloroplast. The disordered stretch occupies residues 1–68 (MATATASRLA…ASTTDAGQDR (68 aa)). A compositionally biased stretch (pro residues) spans 28–37 (APLPSAPPRP). The segment covering 38–60 (RALSAAPRGRVVCPAAPASSPAS) has biased composition (low complexity). The 182-residue stretch at 75–256 (SNIRNFSIIA…AIVTKIPPPQ (182 aa)) folds into the tr-type G domain. GTP contacts are provided by residues 84–91 (AHIDHGKS), 149–153 (DTPGH), and 203–206 (NKID).

Belongs to the TRAFAC class translation factor GTPase superfamily. Classic translation factor GTPase family. LepA subfamily.

The protein localises to the plastid. Its subcellular location is the chloroplast. The catalysed reaction is GTP + H2O = GDP + phosphate + H(+). Its function is as follows. Promotes chloroplast protein synthesis. May act as a fidelity factor of the translation reaction, by catalyzing a one-codon backward translocation of tRNAs on improperly translocated ribosomes. In Oryza sativa subsp. japonica (Rice), this protein is Translation factor GUF1 homolog, chloroplastic.